Here is a 169-residue protein sequence, read N- to C-terminus: Aspartic protease inhibitor 6 (169 aa).

N1 is a glycosylation site (N-linked (GlcNAc...) asparagine). 2 disulfide bridges follow: C30/C75 and C124/C134.

It belongs to the protease inhibitor I3 (leguminous Kunitz-type inhibitor) family.

It is found in the vacuole. Its function is as follows. Inhibitor of cathepsin D (aspartic protease). May also inhibit trypsin and chymotrypsin (serine proteases). Protects the plant by inhibiting proteases of invading organisms. This Solanum tuberosum (Potato) protein is Aspartic protease inhibitor 6.